The primary structure comprises 325 residues: tRNA pseudouridine synthase B (325 aa).

The active-site Nucleophile is Asp-49.

It belongs to the pseudouridine synthase TruB family. Type 1 subfamily.

It catalyses the reaction uridine(55) in tRNA = pseudouridine(55) in tRNA. Responsible for synthesis of pseudouridine from uracil-55 in the psi GC loop of transfer RNAs. This Mesorhizobium japonicum (strain LMG 29417 / CECT 9101 / MAFF 303099) (Mesorhizobium loti (strain MAFF 303099)) protein is tRNA pseudouridine synthase B.